A 293-amino-acid polypeptide reads, in one-letter code: Bifunctional protein FolD (293 aa).

Residues 165–167 (GRS), Ser190, and Ile231 each bind NADP(+).

The protein belongs to the tetrahydrofolate dehydrogenase/cyclohydrolase family. In terms of assembly, homodimer.

It carries out the reaction (6R)-5,10-methylene-5,6,7,8-tetrahydrofolate + NADP(+) = (6R)-5,10-methenyltetrahydrofolate + NADPH. The enzyme catalyses (6R)-5,10-methenyltetrahydrofolate + H2O = (6R)-10-formyltetrahydrofolate + H(+). It functions in the pathway one-carbon metabolism; tetrahydrofolate interconversion. In terms of biological role, catalyzes the oxidation of 5,10-methylenetetrahydrofolate to 5,10-methenyltetrahydrofolate and then the hydrolysis of 5,10-methenyltetrahydrofolate to 10-formyltetrahydrofolate. The polypeptide is Bifunctional protein FolD (Synechococcus sp. (strain WH7803)).